Consider the following 91-residue polypeptide: M-myrmeciitoxin-Mb3a (91 aa).

Positions 1–21 (MKLSCLSLALAIILILAIVHS) are cleaved as a signal peptide. A propeptide spanning residues 22 to 54 (PNMEVKALADPEADAFGEANAFGEADAFAEANA) is cleaved from the precursor.

In terms of assembly, homodimer; disulfide-linked. In terms of tissue distribution, expressed by the venom gland and reservoir.

It is found in the secreted. Its function is as follows. Causes a significant and dose-dependent histamine release, probably by influencing the signal transduction of mast cells through a non-IgE-mediated pathway. This peptide does not have cytotoxic activities. In Myrmecia banksi (Jack jumper ant), this protein is M-myrmeciitoxin-Mb3a.